A 358-amino-acid chain; its full sequence is Peptide chain release factor 1 (358 aa).

Residue Gln-233 is modified to N5-methylglutamine.

It belongs to the prokaryotic/mitochondrial release factor family. Post-translationally, methylated by PrmC. Methylation increases the termination efficiency of RF1.

The protein localises to the cytoplasm. Peptide chain release factor 1 directs the termination of translation in response to the peptide chain termination codons UAG and UAA. The polypeptide is Peptide chain release factor 1 (Agathobacter rectalis (strain ATCC 33656 / DSM 3377 / JCM 17463 / KCTC 5835 / VPI 0990) (Eubacterium rectale)).